Reading from the N-terminus, the 527-residue chain is Bromodomain-containing protein 9 (527 aa).

Residues 1–16 (MNVSVTKRRKKKKKKK) show a composition bias toward basic residues. The segment at 1–54 (MNVSVTKRRKKKKKKKSEKEKDKYLDEDERRRRKEEKKRKREKEQCDSEGETEV) is disordered. The span at 17-30 (SEKEKDKYLDEDER) shows a compositional bias: basic and acidic residues. The span at 31-41 (RRRKEEKKRKR) shows a compositional bias: basic residues. The region spanning 78–182 (NESTPLQQLL…HTGFKMMSKA (105 aa)) is the Bromo domain. Positions 156-158 (TYN) are histone H4K5ac H4K8ac and histone H4K5bu H4K8bu binding. Over residues 468-478 (DFHDVHNDRGG) the composition is skewed to basic and acidic residues. Residues 468–527 (DFHDVHNDRGGSRPSSSSSMSNNSERDHHLGSPSRISVGEQQDIHDPYEFLQSPETDNQN) form a disordered region. Low complexity predominate over residues 479–490 (SRPSSSSSMSNN).

In terms of assembly, binds acetylated histones H3 and H4. Binds butyrylated histone H4.

The protein localises to the nucleus. Plays a role in chromatin remodeling and regulation of transcription. Acts as a chromatin reader that recognizes and binds acylated histones: binds histones that are acetylated and/or butyrylated. The protein is Bromodomain-containing protein 9 (brd9) of Xenopus laevis (African clawed frog).